The sequence spans 343 residues: Multidrug resistance protein MdtN (343 aa).

Residues 1–12 (MESTPKKAPRSK) are Cytoplasmic-facing. A helical; Signal-anchor for type II membrane protein membrane pass occupies residues 13 to 33 (FPALLVVALALVALVFVIWRV). The Periplasmic segment spans residues 34 to 343 (DSAPSTNDAY…ASAVANLEPQ (310 aa)).

This sequence belongs to the membrane fusion protein (MFP) (TC 8.A.1) family. In terms of assembly, could be part of a tripartite efflux system composed of MdtN, MdtO and MdtP.

It is found in the cell inner membrane. In terms of biological role, could be involved in resistance to puromycin, acriflavine and tetraphenylarsonium chloride. This Escherichia coli (strain K12) protein is Multidrug resistance protein MdtN (mdtN).